The primary structure comprises 802 residues: Penicillin G acylase (802 aa).

A signal peptide spans 1–24; it reads MKTKWLISVIILFVFIFPQNLVFA. Glu177 contacts Ca(2+). Positions 235–265 are cleaved as a propeptide — spacer peptide; sequence SAVIKASEKVGKERENFVQTSEELGLPLKIG. Ser266 acts as the Nucleophile in catalysis. Asp341 serves as a coordination point for Ca(2+).

Belongs to the peptidase S45 family. In terms of assembly, heterodimer of an alpha subunit and a beta subunit processed from the same precursor. Ca(2+) serves as cofactor.

The protein resides in the secreted. It carries out the reaction a penicillin + H2O = 6-aminopenicillanate + a carboxylate. The protein is Penicillin G acylase (pac) of Priestia megaterium (Bacillus megaterium).